The sequence spans 502 residues: Glycerol kinase (502 aa).

Thr14 is a binding site for ADP. Residues Thr14, Thr15, and Ser16 each contribute to the ATP site. Sn-glycerol 3-phosphate is bound at residue Thr14. Arg18 serves as a coordination point for ADP. 4 residues coordinate sn-glycerol 3-phosphate: Arg84, Glu85, Tyr136, and Asp246. Arg84, Glu85, Tyr136, Asp246, and Gln247 together coordinate glycerol. The ADP site is built by Thr268 and Gly311. ATP is bound by residues Thr268, Gly311, Gln315, and Gly412. Gly412 and Asn416 together coordinate ADP.

This sequence belongs to the FGGY kinase family. In terms of assembly, homotetramer and homodimer (in equilibrium). Heterodimer with EIIA-Glc. Binds 1 zinc ion per glycerol kinase EIIA-Glc dimer. The zinc ion is important for dimerization.

The enzyme catalyses glycerol + ATP = sn-glycerol 3-phosphate + ADP + H(+). Its pathway is polyol metabolism; glycerol degradation via glycerol kinase pathway; sn-glycerol 3-phosphate from glycerol: step 1/1. Its activity is regulated as follows. Activity of this regulatory enzyme is affected by several metabolites. Allosterically and non-competitively inhibited by fructose 1,6-bisphosphate (FBP) and unphosphorylated phosphocarrier protein EIIA-Glc (III-Glc), an integral component of the bacterial phosphotransferase (PTS) system. Key enzyme in the regulation of glycerol uptake and metabolism. Catalyzes the phosphorylation of glycerol to yield sn-glycerol 3-phosphate. The polypeptide is Glycerol kinase (Enterobacter sp. (strain 638)).